Reading from the N-terminus, the 434-residue chain is Eukaryotic translation initiation factor 3 subunit E (434 aa).

Positions 219–392 (FFNHPKGRDL…GHVVMGTQPL (174 aa)) constitute a PCI domain.

The protein belongs to the eIF-3 subunit E family. As to quaternary structure, component of the eukaryotic translation initiation factor 3 (eIF-3) complex. The eIF-3 complex interacts with pix. Interacts with mxt.

It is found in the cytoplasm. Functionally, component of the eukaryotic translation initiation factor 3 (eIF-3) complex, which is involved in protein synthesis of a specialized repertoire of mRNAs and, together with other initiation factors, stimulates binding of mRNA and methionyl-tRNAi to the 40S ribosome. The eIF-3 complex specifically targets and initiates translation of a subset of mRNAs involved in cell proliferation. The polypeptide is Eukaryotic translation initiation factor 3 subunit E (eIF3-S6) (Drosophila virilis (Fruit fly)).